A 415-amino-acid polypeptide reads, in one-letter code: Translation initiation factor 2 subunit gamma (415 aa).

The 200-residue stretch at 7-206 (QPEVNIGVVG…GIEEYIKTPY (200 aa)) folds into the tr-type G domain. Residues 16–23 (GHVDHGKT) form a G1 region. Residues Asp19, Thr23, Gly44, and Thr46 each contribute to the Mg(2+) site. 19–24 (DHGKTT) contacts GTP. The G2 stretch occupies residues 44–48 (GMTIK). Zn(2+) contacts are provided by Cys59, Cys62, Cys74, and Cys77. The tract at residues 93-96 (DAPG) is G3. GTP is bound by residues 149–152 (NKVD) and 184–186 (SAL). Residues 149-152 (NKVD) are G4. Residues 184–186 (SAL) form a G5 region.

Belongs to the TRAFAC class translation factor GTPase superfamily. Classic translation factor GTPase family. EIF2G subfamily. Heterotrimer composed of an alpha, a beta and a gamma chain. Mg(2+) serves as cofactor.

The catalysed reaction is GTP + H2O = GDP + phosphate + H(+). Its function is as follows. eIF-2 functions in the early steps of protein synthesis by forming a ternary complex with GTP and initiator tRNA. The sequence is that of Translation initiation factor 2 subunit gamma from Saccharolobus solfataricus (strain ATCC 35092 / DSM 1617 / JCM 11322 / P2) (Sulfolobus solfataricus).